The following is a 547-amino-acid chain: Chaperonin GroEL (547 aa).

Residues 30-33, lysine 51, 87-91, glycine 415, 479-481, and aspartate 495 each bind ATP; these read TLGP, DGTTT, and NAA.

Belongs to the chaperonin (HSP60) family. Forms a cylinder of 14 subunits composed of two heptameric rings stacked back-to-back. Interacts with the co-chaperonin GroES.

It localises to the cytoplasm. The enzyme catalyses ATP + H2O + a folded polypeptide = ADP + phosphate + an unfolded polypeptide.. Its function is as follows. Together with its co-chaperonin GroES, plays an essential role in assisting protein folding. The GroEL-GroES system forms a nano-cage that allows encapsulation of the non-native substrate proteins and provides a physical environment optimized to promote and accelerate protein folding. The protein is Chaperonin GroEL of Pseudomonas putida (strain GB-1).